Consider the following 198-residue polypeptide: Recombination protein RecR (198 aa).

A C4-type zinc finger spans residues Cys-57–Cys-72. One can recognise a Toprim domain in the interval Thr-80–Pro-175.

This sequence belongs to the RecR family.

Functionally, may play a role in DNA repair. It seems to be involved in an RecBC-independent recombinational process of DNA repair. It may act with RecF and RecO. The chain is Recombination protein RecR from Geobacillus sp. (strain WCH70).